A 200-amino-acid polypeptide reads, in one-letter code: RPW8-like protein 4 (200 aa).

Residues 1 to 157 (MPIAELAVIK…MKAIQVDQWT (157 aa)) enclose the RPW8 domain. Residues 7–29 (AVIKTVGGPLIAAALGVGAQVIY) traverse the membrane as a helical segment. A coiled-coil region spans residues 70–127 (REVHESLTRLLEDAKSIIEKYWKLRWSRHVCRKYRYIKKLESIELELVRVAREIQVHQ).

The protein belongs to the plant RPW8 protein family.

It is found in the membrane. Its function is as follows. Probable disease resistance (R) protein. The chain is RPW8-like protein 4 (HR4) from Arabidopsis thaliana (Mouse-ear cress).